Consider the following 298-residue polypeptide: 4-diphosphocytidyl-2-C-methyl-D-erythritol kinase (298 aa).

Residue K15 is part of the active site. 100–110 (PIAAGIGGGSA) contributes to the ATP binding site. Residue D142 is part of the active site.

The protein belongs to the GHMP kinase family. IspE subfamily.

It carries out the reaction 4-CDP-2-C-methyl-D-erythritol + ATP = 4-CDP-2-C-methyl-D-erythritol 2-phosphate + ADP + H(+). It functions in the pathway isoprenoid biosynthesis; isopentenyl diphosphate biosynthesis via DXP pathway; isopentenyl diphosphate from 1-deoxy-D-xylulose 5-phosphate: step 3/6. In terms of biological role, catalyzes the phosphorylation of the position 2 hydroxy group of 4-diphosphocytidyl-2C-methyl-D-erythritol. This Rhodopseudomonas palustris (strain BisA53) protein is 4-diphosphocytidyl-2-C-methyl-D-erythritol kinase.